Here is an 81-residue protein sequence, read N- to C-terminus: Translational regulator CsrA (81 aa).

This sequence belongs to the CsrA/RsmA family. In terms of assembly, homodimer; the beta-strands of each monomer intercalate to form a hydrophobic core, while the alpha-helices form wings that extend away from the core.

It is found in the cytoplasm. In terms of biological role, a translational regulator that binds mRNA to regulate translation initiation and/or mRNA stability. Usually binds in the 5'-UTR at or near the Shine-Dalgarno sequence preventing ribosome-binding, thus repressing translation. Its main target seems to be the major flagellin gene, while its function is anatagonized by FliW. The sequence is that of Translational regulator CsrA from Desulforapulum autotrophicum (strain ATCC 43914 / DSM 3382 / VKM B-1955 / HRM2) (Desulfobacterium autotrophicum).